The following is a 572-amino-acid chain: Acetyl-coenzyme A synthetase (572 aa).

A CoA-binding site is contributed by Thr260. ATP-binding positions include 333–335, 354–359, Asp440, and Arg455; these read GEP and DTWWMT. Ser463 lines the CoA pocket. Arg466 serves as a coordination point for ATP. Val477, His479, and Ile482 together coordinate Mg(2+). A CoA-binding site is contributed by Lys524. Lys549 carries the post-translational modification N6-acetyllysine.

It belongs to the ATP-dependent AMP-binding enzyme family. Interacts with FloT. Mg(2+) serves as cofactor. In terms of processing, acetylated. Deacetylation by the SIR2-homolog deacetylase activates the enzyme.

It is found in the cell membrane. Its subcellular location is the membrane raft. It catalyses the reaction acetate + ATP + CoA = acetyl-CoA + AMP + diphosphate. Catalyzes the conversion of acetate into acetyl-CoA (AcCoA), an essential intermediate at the junction of anabolic and catabolic pathways. AcsA undergoes a two-step reaction. In the first half reaction, AcsA combines acetate with ATP to form acetyl-adenylate (AcAMP) intermediate. In the second half reaction, it can then transfer the acetyl group from AcAMP to the sulfhydryl group of CoA, forming the product AcCoA. Has a role in growth and sporulation on acetate. The sequence is that of Acetyl-coenzyme A synthetase (acsA) from Bacillus subtilis (strain 168).